The primary structure comprises 738 residues: Ethylene receptor (738 aa).

Helical transmembrane passes span Ile23–Val43, Val54–Trp74, and Val92–Leu112. Cys65 and His69 together coordinate Cu cation. Residues Asp158 to Leu307 enclose the GAF domain. A Histidine kinase domain is found at Val350 to Glu589. His353 is subject to Phosphohistidine; by autocatalysis. A Response regulatory domain is found at Pro612–Leu729. Asp660 carries the post-translational modification 4-aspartylphosphate.

This sequence belongs to the ethylene receptor family. As to quaternary structure, homodimer; disulfide-linked. Cu cation is required as a cofactor. Post-translationally, activation probably requires a transfer of a phosphate group between a His in the transmitter domain and an Asp of the receiver domain.

The protein localises to the endoplasmic reticulum membrane. It carries out the reaction ATP + protein L-histidine = ADP + protein N-phospho-L-histidine.. May act early in the ethylene signal transduction pathway, possibly as an ethylene receptor, or as a regulator of the pathway. This chain is Ethylene receptor (ETR1), found in Prunus persica (Peach).